The sequence spans 650 residues: DNA-directed RNA polymerase III subunit rpc3 (650 aa).

Disordered regions lie at residues 133–163 (PTAVNGNHEQPEKEIEGEGVEGEGIEEEGHT), 264–283 (RGAKRRRGPGGAERSNKKAR), 288–313 (AVDEDEEEEEENEWSEDEMGGDNIPM), and 400–440 (LAGS…SSDG). Residues 149-158 (GEGVEGEGIE) show a composition bias toward acidic residues. Acidic residues predominate over residues 288-307 (AVDEDEEEEEENEWSEDEMG). The segment at 577 to 598 (TYKSMSRCLQRLRFERNRLKEF) is leucine-zipper.

This sequence belongs to the RNA polymerase beta chain family. In terms of assembly, component of the RNA polymerase III (Pol III) complex consisting of 17 subunits.

Its subcellular location is the nucleus. Its function is as follows. DNA-dependent RNA polymerase catalyzes the transcription of DNA into RNA using the four ribonucleoside triphosphates as substrates. Specific core component of RNA polymerase III which synthesizes small RNAs, such as 5S rRNA and tRNAs. The polypeptide is DNA-directed RNA polymerase III subunit rpc3 (rpc82) (Aspergillus terreus (strain NIH 2624 / FGSC A1156)).